A 252-amino-acid chain; its full sequence is MKNEIAAVVFFFTRLVRKHDKLKKEAVERFAEKLTLILQEKYKNHWYPEKPSKGQAYRCIRVNKFQRVDPDVLKACENSCILYSDLGLPKELTLWVDPCEVCCRYGEKNNAFIVASFENEEENKDEISKKVTRALDKVTSDYHSGSSSSDEETSKEVEVKPNSVTATPSPVYQISELIFPPLPMWHPLPRKKPGMYRGNGHQNHYPPPVPFGYPNQGRKNKPYRPIPVTWVPPPGMHCDRNHWINPHMLAPH.

The segment at 138-165 (VTSDYHSGSSSSDEETSKEVEVKPNSVT) is disordered.

This sequence belongs to the BTG family.

Its function is as follows. Overexpression impairs serum-induced cell cycle progression from the G0/G1 to S phase. This Sus scrofa (Pig) protein is Protein BTG3 (BTG3).